The primary structure comprises 76 residues: Vasotab-TY2 (76 aa).

Positions 1–21 (MKFALFSVLVLMLIATFVAAD) are cleaved as a signal peptide. One can recognise a Kazal-like domain in the interval 22–76 (DCPRICTADYTPVCGTPSGGRRSANRTFANQCGLDSHNCLNKGATYDKLHDGECK). Cystine bridges form between Cys-23–Cys-60, Cys-27–Cys-53, and Cys-35–Cys-75.

Expressed by the salivary gland.

It localises to the secreted. In terms of biological role, vasodilator protein that inhibits vasoconstriction of isolated rat femoral artery induced by phenylephrine. Since platelet aggregation and vasoconstriction are key hemostatic responses, particularly in small wounds, this protein likely participates in the antihemostatic responses during blood feeding. Blocks L-type calcium channels (Cav1/CACNA1) in left ventricular myocytes isolated from rat hearts. The sequence is that of Vasotab-TY2 from Tabanus yao (Horsefly).